A 162-amino-acid chain; its full sequence is ATP synthase subunit b 1 (162 aa).

A helical membrane pass occupies residues 1 to 21 (MLLTAEFWVAVAFVAFLVIVW).

The protein belongs to the ATPase B chain family. In terms of assembly, F-type ATPases have 2 components, F(1) - the catalytic core - and F(0) - the membrane proton channel. F(1) has five subunits: alpha(3), beta(3), gamma(1), delta(1), epsilon(1). F(0) has three main subunits: a(1), b(2) and c(10-14). The alpha and beta chains form an alternating ring which encloses part of the gamma chain. F(1) is attached to F(0) by a central stalk formed by the gamma and epsilon chains, while a peripheral stalk is formed by the delta and b chains.

Its subcellular location is the cell inner membrane. Its function is as follows. F(1)F(0) ATP synthase produces ATP from ADP in the presence of a proton or sodium gradient. F-type ATPases consist of two structural domains, F(1) containing the extramembraneous catalytic core and F(0) containing the membrane proton channel, linked together by a central stalk and a peripheral stalk. During catalysis, ATP synthesis in the catalytic domain of F(1) is coupled via a rotary mechanism of the central stalk subunits to proton translocation. Functionally, component of the F(0) channel, it forms part of the peripheral stalk, linking F(1) to F(0). The sequence is that of ATP synthase subunit b 1 from Methylorubrum populi (strain ATCC BAA-705 / NCIMB 13946 / BJ001) (Methylobacterium populi).